Reading from the N-terminus, the 235-residue chain is Phosphoribosylaminoimidazole-succinocarboxamide synthase (235 aa).

The protein belongs to the SAICAR synthetase family.

The enzyme catalyses 5-amino-1-(5-phospho-D-ribosyl)imidazole-4-carboxylate + L-aspartate + ATP = (2S)-2-[5-amino-1-(5-phospho-beta-D-ribosyl)imidazole-4-carboxamido]succinate + ADP + phosphate + 2 H(+). Its pathway is purine metabolism; IMP biosynthesis via de novo pathway; 5-amino-1-(5-phospho-D-ribosyl)imidazole-4-carboxamide from 5-amino-1-(5-phospho-D-ribosyl)imidazole-4-carboxylate: step 1/2. The chain is Phosphoribosylaminoimidazole-succinocarboxamide synthase from Caldanaerobacter subterraneus subsp. tengcongensis (strain DSM 15242 / JCM 11007 / NBRC 100824 / MB4) (Thermoanaerobacter tengcongensis).